Reading from the N-terminus, the 148-residue chain is Snaclec B1 (148 aa).

The N-terminal stretch at 1–24 is a signal peptide; that stretch reads MGRIIFVSFGLLVVFLSLSGTGAA. 3 disulfide bridges follow: cysteine 27–cysteine 38, cysteine 55–cysteine 144, and cysteine 121–cysteine 136. A C-type lectin domain is found at 34-145; the sequence is YDQHCYKVFD…CRLLGHFVCK (112 aa).

This sequence belongs to the snaclec family. Heterodimer; disulfide-linked. Expressed by the venom gland.

The protein localises to the secreted. Functionally, interferes with one step of hemostasis (modulation of platelet aggregation, or coagulation cascade, for example). The protein is Snaclec B1 of Macrovipera lebetinus (Levantine viper).